The following is a 280-amino-acid chain: Pantothenate synthetase (280 aa).

26–33 provides a ligand contact to ATP; the sequence is MGNLHEGH. His33 acts as the Proton donor in catalysis. Gln57 contacts (R)-pantoate. A beta-alanine-binding site is contributed by Gln57. 145-148 lines the ATP pocket; it reads GKKD. Gln151 is a (R)-pantoate binding site. ATP is bound by residues Val174 and 182 to 185; that span reads LSSR.

It belongs to the pantothenate synthetase family. In terms of assembly, homodimer.

The protein localises to the cytoplasm. The enzyme catalyses (R)-pantoate + beta-alanine + ATP = (R)-pantothenate + AMP + diphosphate + H(+). It functions in the pathway cofactor biosynthesis; (R)-pantothenate biosynthesis; (R)-pantothenate from (R)-pantoate and beta-alanine: step 1/1. Its function is as follows. Catalyzes the condensation of pantoate with beta-alanine in an ATP-dependent reaction via a pantoyl-adenylate intermediate. This is Pantothenate synthetase from Bordetella bronchiseptica (strain ATCC BAA-588 / NCTC 13252 / RB50) (Alcaligenes bronchisepticus).